The chain runs to 95 residues: Co-chaperonin GroES (95 aa).

The protein belongs to the GroES chaperonin family. As to quaternary structure, heptamer of 7 subunits arranged in a ring. Interacts with the chaperonin GroEL.

It is found in the cytoplasm. Its function is as follows. Together with the chaperonin GroEL, plays an essential role in assisting protein folding. The GroEL-GroES system forms a nano-cage that allows encapsulation of the non-native substrate proteins and provides a physical environment optimized to promote and accelerate protein folding. GroES binds to the apical surface of the GroEL ring, thereby capping the opening of the GroEL channel. This Rickettsia akari (strain Hartford) protein is Co-chaperonin GroES.